Here is a 410-residue protein sequence, read N- to C-terminus: Peptidase T (410 aa).

Position 78 (His-78) interacts with Zn(2+). The active site involves Asp-80. Residue Asp-139 participates in Zn(2+) binding. The Proton acceptor role is filled by Glu-173. Residues Glu-174, Asp-196, and His-378 each contribute to the Zn(2+) site.

This sequence belongs to the peptidase M20B family. Requires Zn(2+) as cofactor.

It is found in the cytoplasm. The catalysed reaction is Release of the N-terminal residue from a tripeptide.. Functionally, cleaves the N-terminal amino acid of tripeptides. This is Peptidase T from Shewanella woodyi (strain ATCC 51908 / MS32).